Consider the following 199-residue polypeptide: Dephospho-CoA kinase (199 aa).

One can recognise a DPCK domain in the interval 4-199 (VLGITGGIAT…KWLEEQIGKK (196 aa)). Residue 12–17 (ATGKST) coordinates ATP.

This sequence belongs to the CoaE family.

It is found in the cytoplasm. The enzyme catalyses 3'-dephospho-CoA + ATP = ADP + CoA + H(+). Its pathway is cofactor biosynthesis; coenzyme A biosynthesis; CoA from (R)-pantothenate: step 5/5. In terms of biological role, catalyzes the phosphorylation of the 3'-hydroxyl group of dephosphocoenzyme A to form coenzyme A. This Enterococcus faecalis (strain ATCC 700802 / V583) protein is Dephospho-CoA kinase.